Here is a 796-residue protein sequence, read N- to C-terminus: ER degradation-enhancing alpha-mannosidase-like protein 1 (796 aa).

The N-terminal stretch at methionine 1–cysteine 20 is a signal peptide. An N-linked (GlcNAc...) asparagine glycan is attached at asparagine 86. Catalysis depends on glutamate 372, which acts as the Proton donor. Threonine 495 serves as a coordination point for Ca(2+). N-linked (GlcNAc...) asparagine glycosylation is found at asparagine 517, asparagine 672, and asparagine 762.

Belongs to the glycosyl hydrolase 47 family. Interacts with PDI1. It depends on Ca(2+) as a cofactor.

It is found in the endoplasmic reticulum lumen. It carries out the reaction Hydrolysis of terminal, non-reducing alpha-D-mannose residues in alpha-D-mannosides.. It participates in protein modification; protein glycosylation. Its function is as follows. Alpha-1,2-specific exomannosidase involved in endoplasmic reticulum-associated degradation (ERAD). Delivers misfolded glycoproteins to proteasomes. Forms a complex with PDI1 to process unfolded protein-bound Man8GlcNAc2 oligosaccharides to Man7GlcNAc2, promoting degradation in unfolded protein response. This is ER degradation-enhancing alpha-mannosidase-like protein 1 (MNL1) from Saccharomyces cerevisiae (strain ATCC 204508 / S288c) (Baker's yeast).